The sequence spans 479 residues: Serine carboxypeptidase-like 29 (479 aa).

Residues Met1–Ala28 form the signal peptide. Residues Asn47 and Asn144 are each glycosylated (N-linked (GlcNAc...) asparagine). Intrachain disulfides connect Cys93/Cys349, Cys254/Cys266, and Cys290/Cys317. Ser186 is an active-site residue. Residue Asn293 is glycosylated (N-linked (GlcNAc...) asparagine). Catalysis depends on residues Asp386 and His438.

This sequence belongs to the peptidase S10 family. As to expression, expressed in seedlings, roots, leaves and flowers.

The protein resides in the secreted. Functionally, probable carboxypeptidase. The protein is Serine carboxypeptidase-like 29 (SCPL29) of Arabidopsis thaliana (Mouse-ear cress).